A 587-amino-acid polypeptide reads, in one-letter code: tRNA (guanine(37)-N(1))-methyltransferase 2 (587 aa).

S-adenosyl-L-methionine-binding positions include R360 and 430-431 (DA). The disordered stretch occupies residues 446–469 (ASTRSRKEDVTNKDGNHVTPTEPM). Residues 450–461 (SRKEDVTNKDGN) are compositionally biased toward basic and acidic residues. N478 contributes to the S-adenosyl-L-methionine binding site.

Belongs to the class I-like SAM-binding methyltransferase superfamily. TRM5/TYW2 family. In terms of assembly, monomer.

It is found in the mitochondrion matrix. The protein resides in the nucleus. It localises to the cytoplasm. It carries out the reaction guanosine(37) in tRNA + S-adenosyl-L-methionine = N(1)-methylguanosine(37) in tRNA + S-adenosyl-L-homocysteine + H(+). Specifically methylates the N1 position of guanosine-37 in various cytoplasmic and mitochondrial tRNAs. Methylation is not dependent on the nature of the nucleoside 5' of the target nucleoside. This is the first step in the biosynthesis of wybutosine (yW), a modified base adjacent to the anticodon of tRNAs and required for accurate decoding. This Phaeodactylum tricornutum (strain CCAP 1055/1) protein is tRNA (guanine(37)-N(1))-methyltransferase 2.